Consider the following 189-residue polypeptide: Elongation factor P 2 (189 aa).

It belongs to the elongation factor P family.

Its subcellular location is the cytoplasm. The protein operates within protein biosynthesis; polypeptide chain elongation. In terms of biological role, involved in peptide bond synthesis. Stimulates efficient translation and peptide-bond synthesis on native or reconstituted 70S ribosomes in vitro. Probably functions indirectly by altering the affinity of the ribosome for aminoacyl-tRNA, thus increasing their reactivity as acceptors for peptidyl transferase. In Mesorhizobium japonicum (strain LMG 29417 / CECT 9101 / MAFF 303099) (Mesorhizobium loti (strain MAFF 303099)), this protein is Elongation factor P 2.